The chain runs to 173 residues: Ribosome maturation factor RimM (173 aa).

A PRC barrel domain is found at 92–165 (EDEYYHTDLI…RVVVALPQEI (74 aa)).

It belongs to the RimM family. Binds ribosomal protein uS19.

Its subcellular location is the cytoplasm. Its function is as follows. An accessory protein needed during the final step in the assembly of 30S ribosomal subunit, possibly for assembly of the head region. Essential for efficient processing of 16S rRNA. May be needed both before and after RbfA during the maturation of 16S rRNA. It has affinity for free ribosomal 30S subunits but not for 70S ribosomes. The sequence is that of Ribosome maturation factor RimM from Bradyrhizobium diazoefficiens (strain JCM 10833 / BCRC 13528 / IAM 13628 / NBRC 14792 / USDA 110).